Consider the following 644-residue polypeptide: MFQDNPLLAQLKQQLHSQTPRAEGVVKATEKGFGFLEVDAQKSYFIPPPQMKKVMHGDRIVAVIHTEKERESAEPEALIEPFLTRFVGKIQGKNDRLTIVPDHPMLKDAIPCRAARGVQHEFKEGDWAVAEMRRHPLKGDRSFYADLTQYITFADDHFAPWWVTLARHNLEKEAPNGVATEMLDEGLERQDLTALNFVTIDSASTEDMDDALYAEELADGRLQLTVAIADPTAWIAEGSKLDNAAKIRAFTNYLPGFNIPMLPRELSDDLCSLRANEVRPTLTCRMIIAADGSIDDDIAFFAATIESKAKLAYDNVSDWLENSGTWQPDNEGIAQQIRLLHRICLSRGEWRHHHALVFKDRPDYRFVLGEKGEVLDIVAEPRRIANRIVEESMIAANLCAARVLRDKLGFGIYNVHTGFDPANADALAALLKTHGLHVDAEEVLTLEGFCKLRRELDAQPSGFLDSRIRRFQSFAEISTEPGPHFGLGLEAYATWTSPIRKYGDMINHRLLKAVIKGETIARPREDITQQMAERRRLNRMAERDVGDWLYARFLNDKAGTDTRFAAEIIDVSRGGMRVRLVDNGAVAFIPASFLHAVRDELVCSQENGTIQIKGETVYKVTDVIDVTIAEVRMDTRSIIARPAA.

An RNB domain is found at 189 to 516; sequence RQDLTALNFV…NHRLLKAVIK (328 aa). An S1 motif domain is found at 561–643; sequence DTRFAAEIID…DTRSIIARPA (83 aa).

It belongs to the RNR ribonuclease family. RNase II subfamily.

It localises to the cytoplasm. The enzyme catalyses Exonucleolytic cleavage in the 3'- to 5'-direction to yield nucleoside 5'-phosphates.. Its function is as follows. Involved in mRNA degradation. Hydrolyzes single-stranded polyribonucleotides processively in the 3' to 5' direction. In Salmonella arizonae (strain ATCC BAA-731 / CDC346-86 / RSK2980), this protein is Exoribonuclease 2.